The chain runs to 83 residues: uncharacterized protein (83 aa).

The tract at residues 15–36 is disordered; the sequence is RLKNGRGNKTMSESDYNTSDSG. A compositionally biased stretch (polar residues) spans 21-35; it reads GNKTMSESDYNTSDS.

This is an uncharacterized protein from Aedes vexans (Inland floodwater mosquito).